Here is a 502-residue protein sequence, read N- to C-terminus: Probable cytosol aminopeptidase (502 aa).

Lys269 and Asp274 together coordinate Mn(2+). The active site involves Lys281. Residues Asp292, Asp351, and Glu353 each contribute to the Mn(2+) site. The active site involves Arg355.

Belongs to the peptidase M17 family. Requires Mn(2+) as cofactor.

It is found in the cytoplasm. It catalyses the reaction Release of an N-terminal amino acid, Xaa-|-Yaa-, in which Xaa is preferably Leu, but may be other amino acids including Pro although not Arg or Lys, and Yaa may be Pro. Amino acid amides and methyl esters are also readily hydrolyzed, but rates on arylamides are exceedingly low.. The enzyme catalyses Release of an N-terminal amino acid, preferentially leucine, but not glutamic or aspartic acids.. Its function is as follows. Presumably involved in the processing and regular turnover of intracellular proteins. Catalyzes the removal of unsubstituted N-terminal amino acids from various peptides. This chain is Probable cytosol aminopeptidase, found in Shewanella frigidimarina (strain NCIMB 400).